A 142-amino-acid chain; its full sequence is Hemoglobin subunit alpha-A (142 aa).

The 141-residue stretch at 2-142 (VLTAGDKANV…VATALTSKYR (141 aa)) folds into the Globin domain. The heme b site is built by H59 and H88.

It belongs to the globin family. In terms of assembly, heterotetramer of two alpha-A chains and two beta chains. As to expression, red blood cells.

Involved in oxygen transport from the lung to the various peripheral tissues. The protein is Hemoglobin subunit alpha-A of Chelonoidis niger (Galapagos giant tortoise).